The chain runs to 147 residues: Male-specific protein scotti (147 aa).

Positions 57-76 are disordered; sequence EPPLGVFPAQGGPNGPPRLR. An N-linked (GlcNAc...) asparagine glycan is attached at Asn128.

It belongs to the male-specific scotti family.

In terms of biological role, post-meiotically transcribed gene that has a role in late spermiogenesis; required for actin cone progression during spermatid individualization. The protein is Male-specific protein scotti of Drosophila simulans (Fruit fly).